A 253-amino-acid polypeptide reads, in one-letter code: Bridging integrator 3 (253 aa).

One can recognise a BAR domain in the interval 9–232 (GQPKKQIVPK…LDQPGHSDEQ (224 aa)). 3 coiled-coil regions span residues 18–51 (KTVERDFEREYGKLQQLEEQTRRLQKDMKKSTDA), 120–152 (SLNMAVKRREQALQDYRRLQAKVEKYEEKEKTG), and 231–247 (EQRERENEAKLSELRAL). The interval 220–240 (SHQLDQPGHSDEQRERENEAK) is disordered. The segment covering 227 to 240 (GHSDEQRERENEAK) has biased composition (basic and acidic residues).

As to expression, ubiquitously expressed except in brain.

The protein localises to the cytoplasm. It is found in the cytoskeleton. Functionally, involved in cytokinesis and septation where it has a role in the localization of F-actin. This Homo sapiens (Human) protein is Bridging integrator 3 (BIN3).